Reading from the N-terminus, the 488-residue chain is ATP synthase subunit beta (488 aa).

164 to 171 lines the ATP pocket; the sequence is GGAGVGKT.

Belongs to the ATPase alpha/beta chains family. As to quaternary structure, F-type ATPases have 2 components, CF(1) - the catalytic core - and CF(0) - the membrane proton channel. CF(1) has five subunits: alpha(3), beta(3), gamma(1), delta(1), epsilon(1). CF(0) has four main subunits: a(1), b(1), b'(1) and c(9-12).

The protein localises to the cellular thylakoid membrane. The catalysed reaction is ATP + H2O + 4 H(+)(in) = ADP + phosphate + 5 H(+)(out). In terms of biological role, produces ATP from ADP in the presence of a proton gradient across the membrane. The catalytic sites are hosted primarily by the beta subunits. The polypeptide is ATP synthase subunit beta (Prochlorococcus marinus (strain MIT 9303)).